The following is a 433-amino-acid chain: MAQFYSAKRRTTTRQIITVSVNDLDSFGQGVARHNGKTLFIPGLLSQENAEVTVTEDKKQYARAKVVRRLSDSPERETPRCPHFGVCGGCQQQHASVDLQQRSKSAALARLMKHEVSEVIADVPWGYRRRARLSLNYLPKTQQLQMGFRKAGSSDIVDVKQCPILVPQLEALLPKVRACLGSLQAMRHLGHVELVQATSGTLMILRHTAPLSSADREKLERFSHSEGLDLYLAPDSEIFETVSGEMPWYDSNGLRLTFSPRDFIQVNAGVNQKMVARALEWLDVQPEDRVLDLFCGMGNFTLPLATQAASVVGVEGVPALVEKGQQNARLNGLQNVTFYHENLEEDVTKQPWAKNGFDKVLLDPARAGAAGVMQQIIKLEPIRIVYVSCNPATLARDSEALLKAGYTIARLAMLDMFPHTGHLESMVLFSRVK.

Residues 10–68 (RTTTRQIITVSVNDLDSFGQGVARHNGKTLFIPGLLSQENAEVTVTEDKKQYARAKVVR) enclose the TRAM domain. [4Fe-4S] cluster contacts are provided by cysteine 81, cysteine 87, cysteine 90, and cysteine 162. Positions 265, 294, 299, 315, 342, and 363 each coordinate S-adenosyl-L-methionine. Cysteine 389 serves as the catalytic Nucleophile.

It belongs to the class I-like SAM-binding methyltransferase superfamily. RNA M5U methyltransferase family. RlmD subfamily.

The catalysed reaction is uridine(1939) in 23S rRNA + S-adenosyl-L-methionine = 5-methyluridine(1939) in 23S rRNA + S-adenosyl-L-homocysteine + H(+). Functionally, catalyzes the formation of 5-methyl-uridine at position 1939 (m5U1939) in 23S rRNA. This is 23S rRNA (uracil(1939)-C(5))-methyltransferase RlmD from Shigella dysenteriae serotype 1 (strain Sd197).